A 912-amino-acid polypeptide reads, in one-letter code: Putative respiratory burst oxidase homolog protein J (912 aa).

2 disordered regions span residues 1 to 51 (MKNN…GGGI) and 73 to 112 (WRKS…RTTS). The Cytoplasmic segment spans residues 1–323 (MKNNKKVGTE…VVVTAELMYE (323 aa)). 2 stretches are compositionally biased toward polar residues: residues 29 to 44 (SVKQ…NPES) and 78 to 87 (NLGSPSTRKS). EF-hand-like regions lie at residues 147-155 (AVDGRLPKD) and 181-193 (RQIK…DKEQ). The region spanning 205–240 (DLDCRLQIFFDMCDKDGDGKLTEEEVKEVIVLSASA) is the EF-hand domain. The Ca(2+) site is built by Asp218, Asp220, Asp222, Lys224, and Glu229. Phosphoserine is present on Ser294. A helical membrane pass occupies residues 324-344 (HWKKIWVVTLWLAVNVVLFMW). The Extracellular portion of the chain corresponds to 345–363 (KYEEFTTSPLYNITGRCLC). A helical membrane pass occupies residues 364-384 (AAKGTAEILKLNMALILVPVL). The 158-residue stretch at 366–523 (KGTAEILKLN…LLVIAYALLI (158 aa)) folds into the Ferric oxidoreductase domain. The Cytoplasmic portion of the chain corresponds to 385 to 410 (RRTLTFLRSTFLNHLIPFDDNINFHK). Residues 411–431 (LIAVAIAVISLLHTALHMLCN) traverse the membrane as a helical segment. The Extracellular portion of the chain corresponds to 432–458 (YPRLSSCPYNFYSDYAGNLLGAKQPTY). Residues 459-479 (LGLMLTPVSVTGVLMIIFMGI) traverse the membrane as a helical segment. Over 480–510 (SFTLAMHYFRRNIVKLPIPFNRLAGFNSFWY) the chain is Cytoplasmic. The helical transmembrane segment at 511-531 (AHHLLVIAYALLIIHGYILII) threads the bilayer. Residues 532-697 (EKPWYQKTTW…PYGAPAQSYQ (166 aa)) lie on the Extracellular side of the membrane. An FAD-binding FR-type domain is found at 562–695 (EHNHRVHIIK…KGPYGAPAQS (134 aa)). Residues 698-718 (KFDILLLIGLGIGATPFISIL) traverse the membrane as a helical segment. Topologically, residues 719 to 912 (KDMLNNLKPG…TRFTFHKENF (194 aa)) are cytoplasmic.

The protein belongs to the RBOH (TC 5.B.1.3) family. As to quaternary structure, monomer and homodimer.

Its subcellular location is the membrane. In terms of biological role, calcium-dependent NADPH oxidase that generates superoxide. The sequence is that of Putative respiratory burst oxidase homolog protein J (RBOHJ) from Arabidopsis thaliana (Mouse-ear cress).